The chain runs to 31 residues: Cytochrome b6-f complex subunit 6 (31 aa).

The helical transmembrane segment at 4 to 24 (ITSYFGFLLAALTITSALFIG) threads the bilayer.

Belongs to the PetL family. The 4 large subunits of the cytochrome b6-f complex are cytochrome b6, subunit IV (17 kDa polypeptide, PetD), cytochrome f and the Rieske protein, while the 4 small subunits are PetG, PetL, PetM and PetN. The complex functions as a dimer.

Its subcellular location is the plastid. The protein localises to the chloroplast thylakoid membrane. Component of the cytochrome b6-f complex, which mediates electron transfer between photosystem II (PSII) and photosystem I (PSI), cyclic electron flow around PSI, and state transitions. PetL is important for photoautotrophic growth as well as for electron transfer efficiency and stability of the cytochrome b6-f complex. The sequence is that of Cytochrome b6-f complex subunit 6 from Citrus sinensis (Sweet orange).